We begin with the raw amino-acid sequence, 146 residues long: Basic phospholipase A2 (146 aa).

An N-terminal signal peptide occupies residues 1-21; sequence MNPAHLLVLAAVCVSLLGASS. The propeptide occupies 22–27; the sequence is VPPRPL. Cystine bridges form between Cys38–Cys97, Cys52–Cys145, Cys54–Cys70, Cys69–Cys127, Cys76–Cys120, Cys86–Cys113, and Cys106–Cys118. Ca(2+)-binding residues include Tyr53, Gly55, and Gly57. His73 is an active-site residue. Position 74 (Asp74) interacts with Ca(2+). An N-linked (GlcNAc...) asparagine glycan is attached at Asn109. Asp121 is a catalytic residue.

The protein belongs to the phospholipase A2 family. Group I subfamily. D49 sub-subfamily. Ca(2+) serves as cofactor. As to expression, expressed by the venom gland.

It is found in the secreted. The enzyme catalyses a 1,2-diacyl-sn-glycero-3-phosphocholine + H2O = a 1-acyl-sn-glycero-3-phosphocholine + a fatty acid + H(+). In terms of biological role, PLA2 catalyzes the calcium-dependent hydrolysis of the 2-acyl groups in 3-sn-phosphoglycerides. The sequence is that of Basic phospholipase A2 from Micrurus corallinus (Brazilian coral snake).